The sequence spans 312 residues: tRNA uridine(34) hydroxylase (312 aa).

Residues 130-225 (RGDEVVFFDG…YGEQFGNKGL (96 aa)) enclose the Rhodanese domain. Catalysis depends on Cys-185, which acts as the Cysteine persulfide intermediate.

This sequence belongs to the TrhO family.

The enzyme catalyses uridine(34) in tRNA + AH2 + O2 = 5-hydroxyuridine(34) in tRNA + A + H2O. Its function is as follows. Catalyzes oxygen-dependent 5-hydroxyuridine (ho5U) modification at position 34 in tRNAs. The sequence is that of tRNA uridine(34) hydroxylase from Corynebacterium glutamicum (strain R).